The sequence spans 107 residues: Phosphoribosyl-ATP pyrophosphatase (107 aa).

Belongs to the PRA-PH family.

It localises to the cytoplasm. The enzyme catalyses 1-(5-phospho-beta-D-ribosyl)-ATP + H2O = 1-(5-phospho-beta-D-ribosyl)-5'-AMP + diphosphate + H(+). It participates in amino-acid biosynthesis; L-histidine biosynthesis; L-histidine from 5-phospho-alpha-D-ribose 1-diphosphate: step 2/9. The protein is Phosphoribosyl-ATP pyrophosphatase of Bacillus cereus (strain ZK / E33L).